A 516-amino-acid polypeptide reads, in one-letter code: L-amino-acid oxidase (516 aa).

The signal sequence occupies residues 1-18; it reads MNVFFMFSLLFLAALGSC. A disulfide bridge links Cys28 with Cys189. Residues 61–62, 81–82, Arg89, and 103–106 each bind FAD; these read MA, EA, and GPMR. Substrate is bound by residues Arg106 and His239. Val279 provides a ligand contact to FAD. Cys349 and Cys430 are disulfide-bonded. Asn379 is a glycosylation site (N-linked (GlcNAc...) asparagine). Position 390 (Tyr390) interacts with substrate. FAD is bound by residues Glu475 and 482–487; that span reads GWIDST. 482–483 is a substrate binding site; that stretch reads GW.

This sequence belongs to the flavin monoamine oxidase family. FIG1 subfamily. In terms of assembly, homodimer; non-covalently linked. The cofactor is FAD. Expressed by the venom gland.

Its subcellular location is the secreted. The catalysed reaction is an L-alpha-amino acid + O2 + H2O = a 2-oxocarboxylate + H2O2 + NH4(+). In terms of biological role, catalyzes an oxidative deamination of predominantly hydrophobic and aromatic L-amino acids, thus producing hydrogen peroxide that may contribute to the diverse toxic effects of this enzyme. Exhibits diverse biological activities, such as hemolysis, edema, hemorrhage, apoptosis, antibacterial and antiparasitic activities, as well as regulation of platelet aggregation. Effects of snake L-amino oxidases on platelets are controversial, since they either induce aggregation or inhibit agonist-induced aggregation. These different effects are probably due to different experimental conditions. This Crotalus adamanteus (Eastern diamondback rattlesnake) protein is L-amino-acid oxidase.